A 198-amino-acid chain; its full sequence is Neutrophil gelatinase-associated lipocalin (198 aa).

An N-terminal signal peptide occupies residues 1 to 20 (MPLGLLWLGLALLGALHAQA). A Pyrrolidone carboxylic acid modification is found at Gln21. An a carboxymycobactin-binding site is contributed by 72 to 74 (YAT). Asn85 is a glycosylation site (N-linked (GlcNAc...) asparagine). A disulfide bond links Cys96 and Cys195. Residue Tyr126 participates in enterobactin binding. A carboxymycobactin is bound by residues Lys145, Lys154, and Tyr158. Lys154 contacts enterobactin.

This sequence belongs to the calycin superfamily. Lipocalin family. As to quaternary structure, monomer. Homodimer; disulfide-linked. Heterodimer; disulfide-linked with MMP9. Detected in neutrophils (at protein level). Expressed in bone marrow and in tissues that are prone to exposure to microorganism. High expression is found in bone marrow as well as in uterus, prostate, salivary gland, stomach, appendix, colon, trachea and lung. Expressed in the medullary tubules of the kidney. Not found in the small intestine or peripheral blood leukocytes.

It localises to the secreted. Its subcellular location is the cytoplasmic granule lumen. The protein localises to the cytoplasmic vesicle lumen. Functionally, iron-trafficking protein involved in multiple processes such as apoptosis, innate immunity and renal development. Binds iron through association with 2,3-dihydroxybenzoic acid (2,3-DHBA), a siderophore that shares structural similarities with bacterial enterobactin, and delivers or removes iron from the cell, depending on the context. Iron-bound form (holo-24p3) is internalized following binding to the SLC22A17 (24p3R) receptor, leading to release of iron and subsequent increase of intracellular iron concentration. In contrast, association of the iron-free form (apo-24p3) with the SLC22A17 (24p3R) receptor is followed by association with an intracellular siderophore, iron chelation and iron transfer to the extracellular medium, thereby reducing intracellular iron concentration. Involved in apoptosis due to interleukin-3 (IL3) deprivation: iron-loaded form increases intracellular iron concentration without promoting apoptosis, while iron-free form decreases intracellular iron levels, inducing expression of the proapoptotic protein BCL2L11/BIM, resulting in apoptosis. Involved in innate immunity; limits bacterial proliferation by sequestering iron bound to microbial siderophores, such as enterobactin. Can also bind siderophores from M.tuberculosis. The polypeptide is Neutrophil gelatinase-associated lipocalin (LCN2) (Homo sapiens (Human)).